A 36-amino-acid polypeptide reads, in one-letter code: Photosystem I reaction center subunit VIII (36 aa).

The helical transmembrane segment at 7–29 (PSILVPLVGLVFPAITLASLFIY) threads the bilayer.

It belongs to the PsaI family.

It localises to the plastid. It is found in the chloroplast thylakoid membrane. Functionally, may help in the organization of the PsaL subunit. This Anthoceros angustus (Hornwort) protein is Photosystem I reaction center subunit VIII.